The chain runs to 138 residues: Ribosome-binding factor A (138 aa).

The protein belongs to the RbfA family. Monomer. Binds 30S ribosomal subunits, but not 50S ribosomal subunits or 70S ribosomes.

Its subcellular location is the cytoplasm. Functionally, one of several proteins that assist in the late maturation steps of the functional core of the 30S ribosomal subunit. Associates with free 30S ribosomal subunits (but not with 30S subunits that are part of 70S ribosomes or polysomes). Required for efficient processing of 16S rRNA. May interact with the 5'-terminal helix region of 16S rRNA. The chain is Ribosome-binding factor A from Bradyrhizobium sp. (strain ORS 278).